The chain runs to 381 residues: Protein pelota homolog (381 aa).

Belongs to the eukaryotic release factor 1 family. Pelota subfamily. Component of the Pelota-HBS1L complex, also named Dom34-Hbs1 complex, composed of pelo-1 and hbs-1. A divalent metal cation serves as cofactor.

It is found in the cytoplasm. The protein localises to the nucleus. Functionally, component of the Pelota-HBS1L complex, a complex that recognizes stalled ribosomes and triggers the No-Go Decay (NGD) pathway. In the Pelota-HBS1L complex, pelo-1 recognizes ribosomes stalled at the 3' end of an mRNA and engages stalled ribosomes by destabilizing mRNA in the mRNA channel. Following ribosome-binding, the Pelota-HBS1L complex promotes the disassembly of stalled ribosomes, followed by degradation of damaged mRNAs as part of the NGD pathway. In Caenorhabditis elegans, this protein is Protein pelota homolog.